Here is a 664-residue protein sequence, read N- to C-terminus: Transketolase 1 (664 aa).

His26 serves as a coordination point for substrate. Residues His66 and 114-116 (GPL) each bind thiamine diphosphate. Asp155 contributes to the Mg(2+) binding site. Residues Gly156 and Asn185 each coordinate thiamine diphosphate. Mg(2+)-binding residues include Asn185 and Ile187. The substrate site is built by His260, Arg357, and Ser384. A thiamine diphosphate-binding site is contributed by His260. Residue Glu411 is the Proton donor of the active site. Residue Phe437 participates in thiamine diphosphate binding. Residues His461, Asp469, and Arg520 each contribute to the substrate site.

Belongs to the transketolase family. In terms of assembly, homodimer. The cofactor is Mg(2+). It depends on Ca(2+) as a cofactor. Requires Mn(2+) as cofactor. Co(2+) serves as cofactor. Thiamine diphosphate is required as a cofactor.

It carries out the reaction D-sedoheptulose 7-phosphate + D-glyceraldehyde 3-phosphate = aldehydo-D-ribose 5-phosphate + D-xylulose 5-phosphate. In terms of biological role, catalyzes the transfer of a two-carbon ketol group from a ketose donor to an aldose acceptor, via a covalent intermediate with the cofactor thiamine pyrophosphate. The protein is Transketolase 1 (tkt1) of Vibrio vulnificus (strain CMCP6).